Here is a 360-residue protein sequence, read N- to C-terminus: Peptide chain release factor 1 (360 aa).

Gln-235 carries the post-translational modification N5-methylglutamine.

Belongs to the prokaryotic/mitochondrial release factor family. Post-translationally, methylated by PrmC. Methylation increases the termination efficiency of RF1.

The protein resides in the cytoplasm. Peptide chain release factor 1 directs the termination of translation in response to the peptide chain termination codons UAG and UAA. The polypeptide is Peptide chain release factor 1 (Methylobacillus flagellatus (strain ATCC 51484 / DSM 6875 / VKM B-1610 / KT)).